The primary structure comprises 741 residues: Hemolysin (741 aa).

The N-terminal stretch at 1–25 (MPKLNRCAIAIFTILSAISSPTLLA) is a signal peptide. Residues 26-157 (NINEPSGEAA…RSGFASPAPA (132 aa)) constitute a propeptide that is removed on maturation. 3 disulfide bridges follow: Cys182–Cys200, Cys497–Cys511, and Cys537–Cys549. In terms of domain architecture, Ricin B-type lectin spans 484–575 (RPVNLQLASF…LTNVYSGESL (92 aa)). Positions 607–741 (NAQESSPILG…LVKGVQFDLN (135 aa)) are beta-prism domain.

This sequence belongs to the HlyA hemolysin family. Monomer. Homoheptamer. After binding to target membranes the protein assembles into a heptameric pre-pore complex. Proteolytic cleavage triggers a conformation change that is required for membrane insertion and pore formation. In terms of processing, proteolytical cleavage is required to convert the 80 kDa hemolysin precursor into the active 65 kDa hemolysin.

Its subcellular location is the secreted. The protein resides in the host cell membrane. Functionally, bacterial hemolysin that causes cytolysis by forming heptameric pores in target host membranes. This is Hemolysin (hlyA) from Vibrio cholerae serotype O1 (strain ATCC 39315 / El Tor Inaba N16961).